The primary structure comprises 805 residues: Leucine--tRNA ligase (805 aa).

Residues 40–51 carry the 'HIGH' region motif; it reads PYPSGAGLHVGH. The short motif at 576-580 is the 'KMSKS' region element; that stretch reads KMSKS. Lys-579 contacts ATP.

This sequence belongs to the class-I aminoacyl-tRNA synthetase family.

It is found in the cytoplasm. It catalyses the reaction tRNA(Leu) + L-leucine + ATP = L-leucyl-tRNA(Leu) + AMP + diphosphate. In Anoxybacillus flavithermus (strain DSM 21510 / WK1), this protein is Leucine--tRNA ligase.